The chain runs to 366 residues: Endophilin-A (366 aa).

A BAR domain is found at 18–248; the sequence is TEKMGGAEGT…LQEKRSEAES (231 aa). A coiled-coil region spans residues 227–247; sequence QCADVLRGLQETLQEKRSEAE. Residues 266–295 form a disordered region; the sequence is GGGGGLNEDGTPSHISSSASPLPSPMRSPA. Positions 277-294 are enriched in low complexity; the sequence is PSHISSSASPLPSPMRSP. In terms of domain architecture, SH3 spans 305–364; that stretch reads QQQPCCQALYDFDPENPGELGFKENDIITLLNRVDDNWYEGSVNGRTGYFPQSYVQVQVP.

It belongs to the endophilin family.

Its subcellular location is the cytoplasm. It is found in the membrane. Functionally, required presynaptically at the neuromuscular junction. Implicated in synaptic vesicle endocytosis. This Drosophila willistoni (Fruit fly) protein is Endophilin-A.